We begin with the raw amino-acid sequence, 177 residues long: NADH-quinone oxidoreductase subunit B (177 aa).

[4Fe-4S] cluster contacts are provided by cysteine 56, cysteine 57, cysteine 121, and cysteine 151.

It belongs to the complex I 20 kDa subunit family. As to quaternary structure, NDH-1 is composed of 14 different subunits. Subunits NuoB, C, D, E, F, and G constitute the peripheral sector of the complex. It depends on [4Fe-4S] cluster as a cofactor.

It is found in the cell inner membrane. The catalysed reaction is a quinone + NADH + 5 H(+)(in) = a quinol + NAD(+) + 4 H(+)(out). Its function is as follows. NDH-1 shuttles electrons from NADH, via FMN and iron-sulfur (Fe-S) centers, to quinones in the respiratory chain. Couples the redox reaction to proton translocation (for every two electrons transferred, four hydrogen ions are translocated across the cytoplasmic membrane), and thus conserves the redox energy in a proton gradient. The polypeptide is NADH-quinone oxidoreductase subunit B (Dinoroseobacter shibae (strain DSM 16493 / NCIMB 14021 / DFL 12)).